The sequence spans 474 residues: Na(+)/H(+) antiporter NhaA 3 (474 aa).

Helical transmembrane passes span V31–A51, L73–I93, A110–V130, G141–G161, F171–F191, T194–L214, G220–V240, L280–A300, L309–L329, V347–L367, and E378–L398.

It belongs to the NhaA Na(+)/H(+) (TC 2.A.33) antiporter family.

Its subcellular location is the cell membrane. The enzyme catalyses Na(+)(in) + 2 H(+)(out) = Na(+)(out) + 2 H(+)(in). Its function is as follows. Na(+)/H(+) antiporter that extrudes sodium in exchange for external protons. In Streptomyces coelicolor (strain ATCC BAA-471 / A3(2) / M145), this protein is Na(+)/H(+) antiporter NhaA 3.